We begin with the raw amino-acid sequence, 238 residues long: ATP synthase subunit a (238 aa).

5 helical membrane passes run 17 to 37 (LSDM…AVAA), 75 to 95 (FLTL…LGLP), 112 to 132 (DATV…YYGV), 179 to 199 (ILLG…AVGA), and 202 to 222 (FPIM…AFIF).

Belongs to the ATPase A chain family. In terms of assembly, F-type ATPases have 2 components, CF(1) - the catalytic core - and CF(0) - the membrane proton channel. CF(1) has five subunits: alpha(3), beta(3), gamma(1), delta(1), epsilon(1). CF(0) has three main subunits: a(1), b(2) and c(9-12). The alpha and beta chains form an alternating ring which encloses part of the gamma chain. CF(1) is attached to CF(0) by a central stalk formed by the gamma and epsilon chains, while a peripheral stalk is formed by the delta and b chains.

Its subcellular location is the cell membrane. In terms of biological role, key component of the proton channel; it plays a direct role in the translocation of protons across the membrane. The polypeptide is ATP synthase subunit a (Bacillus sp. (strain PS3)).